The primary structure comprises 845 residues: Beta-mannosidase B (845 aa).

The segment at 1 to 20 (MSKLQQFPLSKGWSFRDSED) is disordered. A glycan (N-linked (GlcNAc...) asparagine) is linked at N252. The Proton donor role is filled by E432. N717 and N723 each carry an N-linked (GlcNAc...) asparagine glycan.

Belongs to the glycosyl hydrolase 2 family. Beta-mannosidase B subfamily.

The catalysed reaction is Hydrolysis of terminal, non-reducing beta-D-mannose residues in beta-D-mannosides.. It functions in the pathway glycan metabolism; N-glycan degradation. Functionally, exoglycosidase that cleaves the single beta-linked mannose residue from the non-reducing end of beta-mannosidic oligosaccharides of various complexity and length. Prefers mannobiose over mannotriose and has no activity against polymeric mannan. Is also severely restricted by galactosyl substitutions at the +1 subsite. This chain is Beta-mannosidase B (mndB), found in Neosartorya fischeri (strain ATCC 1020 / DSM 3700 / CBS 544.65 / FGSC A1164 / JCM 1740 / NRRL 181 / WB 181) (Aspergillus fischerianus).